The chain runs to 411 residues: 2,3-bisphosphoglycerate-independent phosphoglycerate mutase (411 aa).

This sequence belongs to the BPG-independent phosphoglycerate mutase family. A-PGAM subfamily. Homotetramer. The cofactor is Mg(2+).

It catalyses the reaction (2R)-2-phosphoglycerate = (2R)-3-phosphoglycerate. The protein operates within carbohydrate degradation; glycolysis; pyruvate from D-glyceraldehyde 3-phosphate: step 3/5. Its activity is regulated as follows. Inhibited to approximately 20% by EDTA. Catalyzes the interconversion of 2-phosphoglycerate and 3-phosphoglycerate. This is 2,3-bisphosphoglycerate-independent phosphoglycerate mutase (apgM) from Pyrococcus furiosus (strain ATCC 43587 / DSM 3638 / JCM 8422 / Vc1).